Here is a 161-residue protein sequence, read N- to C-terminus: Probable chemoreceptor glutamine deamidase CheD (161 aa).

This sequence belongs to the CheD family.

It carries out the reaction L-glutaminyl-[protein] + H2O = L-glutamyl-[protein] + NH4(+). Its function is as follows. Probably deamidates glutamine residues to glutamate on methyl-accepting chemotaxis receptors (MCPs), playing an important role in chemotaxis. The chain is Probable chemoreceptor glutamine deamidase CheD from Syntrophomonas wolfei subsp. wolfei (strain DSM 2245B / Goettingen).